A 180-amino-acid chain; its full sequence is Large ribosomal subunit protein uL6 (180 aa).

It belongs to the universal ribosomal protein uL6 family. As to quaternary structure, part of the 50S ribosomal subunit.

This protein binds to the 23S rRNA, and is important in its secondary structure. It is located near the subunit interface in the base of the L7/L12 stalk, and near the tRNA binding site of the peptidyltransferase center. In Salinispora tropica (strain ATCC BAA-916 / DSM 44818 / JCM 13857 / NBRC 105044 / CNB-440), this protein is Large ribosomal subunit protein uL6.